The sequence spans 384 residues: 4-coumarate--CoA ligase (384 aa).

This sequence belongs to the ATP-dependent AMP-binding enzyme family.

The catalysed reaction is (E)-4-coumarate + ATP + CoA = (E)-4-coumaroyl-CoA + AMP + diphosphate. Its function is as follows. Converts p-coumaric acid into p-coumaryl CoA. This is necessary for the activation of the photoactive yellow protein (PYP) chromophore. In Rhodobacter capsulatus (strain ATCC BAA-309 / NBRC 16581 / SB1003), this protein is 4-coumarate--CoA ligase (pcl).